The sequence spans 444 residues: Transposase for insertion sequence element IS1557 (444 aa).

Residues 273 to 292 are disordered; that stretch reads PKWGRGRPGKNAAPRPGRER.

This sequence belongs to the transposase 12 family.

The polypeptide is Transposase for insertion sequence element IS1557 (Mycobacterium tuberculosis (strain CDC 1551 / Oshkosh)).